We begin with the raw amino-acid sequence, 267 residues long: Apolipoprotein A-I (267 aa).

Positions 1 to 18 (MKAAVLTLAVLFLTGSQA) are cleaved as a signal peptide. 2 tandem repeats follow at residues 68–89 (LKLL…EQLG) and 90–111 (PVTQ…QEMS). A 10 X approximate tandem repeats region spans residues 68–267 (LKLLDNWDSM…EEYTKKLNTQ (200 aa)). A Methionine sulfoxide modification is found at Met-110. A 3; half-length repeat occupies 112-122 (KDLEEVKAKVQ). Repeat copies occupy residues 123–144 (PYLD…QKVE), 145–166 (PLRA…EKLS), 167–188 (PLGE…THLA), 189–210 (PYTD…ENGG), and 211–232 (ARLA…EKAK). Met-136 carries the methionine sulfoxide modification. Residues 233–243 (PALEDLRQGLL) form a 9; half-length repeat. The stretch at 244–267 (PVLESFKVSFLSALEEYTKKLNTQ) is repeat 10.

It belongs to the apolipoprotein A1/A4/E family. As to quaternary structure, homodimer. Interacts with APOA1BP and CLU. Component of a sperm activating protein complex (SPAP), consisting of APOA1, an immunoglobulin heavy chain, an immunoglobulin light chain and albumin. Interacts with NDRG1. Interacts with SCGB3A2. Interacts with NAXE and YJEFN3. In terms of processing, glycosylated. Post-translationally, palmitoylated. As to expression, major protein of plasma HDL, also found in chylomicrons.

The protein localises to the secreted. Functionally, participates in the reverse transport of cholesterol from tissues to the liver for excretion by promoting cholesterol efflux from tissues and by acting as a cofactor for the lecithin cholesterol acyltransferase (LCAT). As part of the SPAP complex, activates spermatozoa motility. In Pongo abelii (Sumatran orangutan), this protein is Apolipoprotein A-I (APOA1).